We begin with the raw amino-acid sequence, 281 residues long: MTGESGSAAPSIALNDENTMPVLGLGVAELSDDETERAVSAALEVGCRLIDTAAAYGNEAAVGRAIAASGIPRAELFVTTKLATSDQGFKGAMDACEASLERLGLDYVDLYLIHWPAPALGTYVNSFGGMIQSRGNGHARSIGVSNFTEEYLTTVIDLTFVTPAVNQIELHPLLNQEALRKTNAEHNVVTQSYTPLALGKLNDHPTVNSVAAEYGKTASQVLLRWNLQLSNAVIFRSANAEHIASDFDVFDFELAAEHMDAINALNDGTRLRPDPDTYEGS.

Tyr-56 (proton donor) is an active-site residue. Residues Leu-196, Ile-234, Arg-236, Ser-237, Ala-238, Ser-245, and Arg-272 each contribute to the NADPH site.

The protein belongs to the aldo/keto reductase family.

This Mycolicibacterium paratuberculosis (strain ATCC BAA-968 / K-10) (Mycobacterium paratuberculosis) protein is Aldo-keto reductase MAP_3007.